The sequence spans 349 residues: Flap endonuclease 1 (349 aa).

The tract at residues 1–98 (MDLGEIVEDV…EEIERRKRAK (98 aa)) is N-domain. D27, D80, E152, E154, D173, D175, and D236 together coordinate Mg(2+). The I-domain stretch occupies residues 116-258 (EIRKYAQAAV…TALRIIKKYN (143 aa)). The interval 341–349 (KQTGLDQWF) is interaction with PCNA.

The protein belongs to the XPG/RAD2 endonuclease family. FEN1 subfamily. Interacts with PCNA. PCNA stimulates the nuclease activity without altering cleavage specificity. Mg(2+) is required as a cofactor.

Functionally, structure-specific nuclease with 5'-flap endonuclease and 5'-3' exonuclease activities involved in DNA replication and repair. During DNA replication, cleaves the 5'-overhanging flap structure that is generated by displacement synthesis when DNA polymerase encounters the 5'-end of a downstream Okazaki fragment. Binds the unpaired 3'-DNA end and kinks the DNA to facilitate 5' cleavage specificity. Cleaves one nucleotide into the double-stranded DNA from the junction in flap DNA, leaving a nick for ligation. Also involved in the base excision repair (BER) pathway. Acts as a genome stabilization factor that prevents flaps from equilibrating into structures that lead to duplications and deletions. Also possesses 5'-3' exonuclease activity on nicked or gapped double-stranded DNA. In Sulfolobus acidocaldarius (strain ATCC 33909 / DSM 639 / JCM 8929 / NBRC 15157 / NCIMB 11770), this protein is Flap endonuclease 1.